Reading from the N-terminus, the 216-residue chain is Pyridoxine/pyridoxamine 5'-phosphate oxidase (216 aa).

FMN contacts are provided by residues R63–K68, Y78–S79, K85, and Q107. K68 contacts substrate. Y125 and R129 together coordinate substrate. Residues Q142–S143 and W187 each bind FMN. Position 193–195 (R193–H195) interacts with substrate. R197 contributes to the FMN binding site.

Belongs to the pyridoxamine 5'-phosphate oxidase family. In terms of assembly, homodimer. FMN serves as cofactor.

It carries out the reaction pyridoxamine 5'-phosphate + O2 + H2O = pyridoxal 5'-phosphate + H2O2 + NH4(+). The enzyme catalyses pyridoxine 5'-phosphate + O2 = pyridoxal 5'-phosphate + H2O2. The protein operates within cofactor metabolism; pyridoxal 5'-phosphate salvage; pyridoxal 5'-phosphate from pyridoxamine 5'-phosphate: step 1/1. It participates in cofactor metabolism; pyridoxal 5'-phosphate salvage; pyridoxal 5'-phosphate from pyridoxine 5'-phosphate: step 1/1. Its function is as follows. Catalyzes the oxidation of either pyridoxine 5'-phosphate (PNP) or pyridoxamine 5'-phosphate (PMP) into pyridoxal 5'-phosphate (PLP). The protein is Pyridoxine/pyridoxamine 5'-phosphate oxidase of Bradyrhizobium sp. (strain BTAi1 / ATCC BAA-1182).